A 336-amino-acid chain; its full sequence is DNA-directed RNA polymerase subunit alpha (336 aa).

Residues 1–232 (MIQKNWQELI…DQLSVFVNFD (232 aa)) are alpha N-terminal domain (alpha-NTD). The tract at residues 248 to 336 (FNPALLKKVD…DLAKRYEDQY (89 aa)) is alpha C-terminal domain (alpha-CTD).

This sequence belongs to the RNA polymerase alpha chain family. As to quaternary structure, homodimer. The RNAP catalytic core consists of 2 alpha, 1 beta, 1 beta' and 1 omega subunit. When a sigma factor is associated with the core the holoenzyme is formed, which can initiate transcription.

The catalysed reaction is RNA(n) + a ribonucleoside 5'-triphosphate = RNA(n+1) + diphosphate. In terms of biological role, DNA-dependent RNA polymerase catalyzes the transcription of DNA into RNA using the four ribonucleoside triphosphates as substrates. This chain is DNA-directed RNA polymerase subunit alpha, found in Sinorhizobium medicae (strain WSM419) (Ensifer medicae).